Consider the following 106-residue polypeptide: uncharacterized protein (106 aa).

Residues 1–31 (MNNERLMLKGIFLGAAAGAALSLLHKPTRQA) form the signal peptide. Positions 57–89 (VITKVDEAKKLARTLSKEVDFVNQQVKELKKTT) form a coiled coil.

This is an uncharacterized protein from Bacillus subtilis (strain 168).